The sequence spans 180 residues: Adenine phosphoribosyltransferase (180 aa).

This sequence belongs to the purine/pyrimidine phosphoribosyltransferase family. In terms of assembly, homodimer.

It localises to the cytoplasm. The catalysed reaction is AMP + diphosphate = 5-phospho-alpha-D-ribose 1-diphosphate + adenine. Its pathway is purine metabolism; AMP biosynthesis via salvage pathway; AMP from adenine: step 1/1. Catalyzes a salvage reaction resulting in the formation of AMP, that is energically less costly than de novo synthesis. The polypeptide is Adenine phosphoribosyltransferase (Mycolicibacterium smegmatis (strain ATCC 700084 / mc(2)155) (Mycobacterium smegmatis)).